A 198-amino-acid polypeptide reads, in one-letter code: Probable GTP-binding protein EngB (198 aa).

The 175-residue stretch at 21-195 (NFSEVAFLGR…EDIIINQTLG (175 aa)) folds into the EngB-type G domain. Residues 29–36 (GRSNVGKS), 56–60 (GKTQL), 81–84 (DLPG), 151–154 (TKCD), and 174–176 (VSN) each bind GTP. Positions 36 and 58 each coordinate Mg(2+).

The protein belongs to the TRAFAC class TrmE-Era-EngA-EngB-Septin-like GTPase superfamily. EngB GTPase family. Requires Mg(2+) as cofactor.

Functionally, necessary for normal cell division and for the maintenance of normal septation. This chain is Probable GTP-binding protein EngB, found in Campylobacter jejuni subsp. jejuni serotype O:2 (strain ATCC 700819 / NCTC 11168).